Here is a 1302-residue protein sequence, read N- to C-terminus: Multidrug resistance protein homolog 65 (1302 aa).

The tract at residues 1–23 is disordered; sequence MERDEVSTSSSEGKSQEEAPMAE. Residues 1-48 are Cytoplasmic-facing; sequence MERDEVSTSSSEGKSQEEAPMAEGLEPTEPIAFLKLFRFSTYGEIGWL. The ABC transmembrane type-1 1 domain maps to 48–369; it reads LFFGFIMCCI…TAPFLESFAT (322 aa). A helical membrane pass occupies residues 49-69; that stretch reads FFGFIMCCIKALTLPAVVIIY. The Extracellular segment spans residues 70–118; that stretch reads SEFTSMLVDRAMQFGTSSNVHALPLFGGGKTLTNASREENNEALYDDSI. A glycan (N-linked (GlcNAc...) asparagine) is linked at asparagine 103. The helical transmembrane segment at 119–147 threads the bilayer; it reads SYGILLTIASVVMFISGIFSVDVFNMVAL. The Cytoplasmic segment spans residues 148 to 194; the sequence is RQVTRMRIKLFSSVIRQDIGWHDLASKQNFTQSMVDDVEKIRDGISE. The helical transmembrane segment at 195–215 threads the bilayer; sequence KVGHFVYLVVGFIITVAISFS. The Extracellular segment spans residues 216 to 223; the sequence is YGWKLTLA. A helical transmembrane segment spans residues 224-242; that stretch reads VSSYIPLVILLNYYVAKFQ. Over 243–302 the chain is Cytoplasmic; sequence GKLTAREQESYAGAGNLAEEILSSIRTVVSFGGEKSEVQRYENFLVPARKASQWKGAFSG. A helical transmembrane segment spans residues 303-323; sequence LSDAVLKSMLYLSCAGAFWYG. Residues 324–341 are Extracellular-facing; sequence VNLIIDDRNVENKEYTPA. Residues 342–362 form a helical membrane-spanning segment; that stretch reads ILMIAFFGIIVGADNIARTAP. Topologically, residues 363–731 are cytoplasmic; the sequence is FLESFATARG…LQLAKQEWCY (369 aa). The ABC transporter 1 domain maps to 405–641; it reads VEFQDVFFRY…EGAYYNMVRA (237 aa). 440 to 447 serves as a coordination point for ATP; that stretch reads GSSGCGKS. The helical transmembrane segment at 732–753 threads the bilayer; it reads LILGTISAVAVGFLYPAFAVIF. The 289-residue stretch at 732-1020 folds into the ABC transmembrane type-1 2 domain; sequence LILGTISAVA…SLAFTPAFSA (289 aa). Over 754-776 the chain is Extracellular; sequence GEFYAALAEKDPEDALRRTAVLS. A helical transmembrane segment spans residues 777–798; the sequence is WACLGLAFLTGLVCFLQTYLFN. The Cytoplasmic portion of the chain corresponds to 799-852; the sequence is YAGIWLTTRMRAMTFNAMVNQEVGWFDDENNSVGALSARLSGEAVDIQGAIGYP. The helical transmembrane segment at 853 to 873 threads the bilayer; that stretch reads LSGMIQALSNFISSVSVAMYY. Residue asparagine 874 is a topological domain, extracellular. Residues 875-894 form a helical membrane-spanning segment; it reads WKLALLCLANCPIIVGSVIL. The Cytoplasmic segment spans residues 895–956; the sequence is EAKMMSNAVV…VEVLIRQKLR (62 aa). A helical transmembrane segment spans residues 957–977; it reads WRGVLNSTMQASAFFAYAVAL. Residues 978-993 lie on the Extracellular side of the membrane; it reads CYGGVLVSEGQLPFQD. The helical transmembrane segment at 994-1014 threads the bilayer; the sequence is IIKVSETLLYGSMMLAQSLAF. Residues 1015–1302 are Cytoplasmic-facing; that stretch reads TPAFSAALIA…AKLHKTQKDH (288 aa). Residues 1059 to 1298 enclose the ABC transporter 2 domain; the sequence is VRYRGIQFRY…GGIYAKLHKT (240 aa). 1094 to 1101 provides a ligand contact to ATP; the sequence is GHSGCGKS.

The protein belongs to the ABC transporter superfamily. ABCB family. Multidrug resistance exporter (TC 3.A.1.201) subfamily.

It localises to the membrane. It carries out the reaction ATP + H2O + xenobioticSide 1 = ADP + phosphate + xenobioticSide 2.. In Drosophila melanogaster (Fruit fly), this protein is Multidrug resistance protein homolog 65 (Mdr65).